We begin with the raw amino-acid sequence, 683 residues long: DNA ligase (683 aa).

NAD(+) is bound by residues 36-40, 85-86, and Glu-121; these read DAVYD and SL. Residue Lys-123 is the N6-AMP-lysine intermediate of the active site. NAD(+) is bound by residues Arg-144, Glu-180, Lys-296, and Lys-320. Cys-413, Cys-416, Cys-431, and Cys-437 together coordinate Zn(2+). Residues 605–683 form the BRCT domain; the sequence is PSEGHLSGKV…ESGWRVLAGL (79 aa).

The protein belongs to the NAD-dependent DNA ligase family. LigA subfamily. Mg(2+) serves as cofactor. It depends on Mn(2+) as a cofactor.

The enzyme catalyses NAD(+) + (deoxyribonucleotide)n-3'-hydroxyl + 5'-phospho-(deoxyribonucleotide)m = (deoxyribonucleotide)n+m + AMP + beta-nicotinamide D-nucleotide.. Its function is as follows. DNA ligase that catalyzes the formation of phosphodiester linkages between 5'-phosphoryl and 3'-hydroxyl groups in double-stranded DNA using NAD as a coenzyme and as the energy source for the reaction. It is essential for DNA replication and repair of damaged DNA. This is DNA ligase from Gluconobacter oxydans (strain 621H) (Gluconobacter suboxydans).